We begin with the raw amino-acid sequence, 354 residues long: uncharacterized protein (354 aa).

Residues 96–130 are disordered; sequence QVCPASAPNGKRAMKIPKVKEPRGENSSKKSSADQ. Over residues 113–127 the composition is skewed to basic and acidic residues; sequence KVKEPRGENSSKKSS.

This is an uncharacterized protein from Caenorhabditis elegans.